The chain runs to 201 residues: uncharacterized protein (201 aa).

Belongs to the phosphatidylethanolamine-binding protein family.

This is an uncharacterized protein from Saccharomyces cerevisiae (strain ATCC 204508 / S288c) (Baker's yeast).